A 1186-amino-acid chain; its full sequence is Chromosome partition protein Smc (1186 aa).

Residue 32–39 (PNGSGKSN) coordinates ATP. 2 coiled-coil regions span residues 167-206 (VLKY…EPLK) and 259-481 (SSAI…QAYQ). The 119-residue stretch at 519-637 (GIRGAVLELI…EDLKGANELA (119 aa)) folds into the SMC hinge domain. Coiled-coil stretches lie at residues 672–864 (LLGR…MSSS), 893–943 (RDQR…NLLQ), and 990–1029 (SIDE…DEEM).

It belongs to the SMC family. Homodimer.

It is found in the cytoplasm. Its function is as follows. Required for chromosome condensation and partitioning. The sequence is that of Chromosome partition protein Smc from Bacillus subtilis (strain 168).